Consider the following 589-residue polypeptide: V-type ATP synthase alpha chain 1 (589 aa).

239-246 (GPFGAGKT) serves as a coordination point for ATP.

Belongs to the ATPase alpha/beta chains family.

The catalysed reaction is ATP + H2O + 4 H(+)(in) = ADP + phosphate + 5 H(+)(out). Its function is as follows. Produces ATP from ADP in the presence of a proton gradient across the membrane. The V-type alpha chain is a catalytic subunit. This chain is V-type ATP synthase alpha chain 1 (atpA1), found in Treponema pallidum (strain Nichols).